Consider the following 264-residue polypeptide: Ferric siderophore reductase (264 aa).

Residues Ser-9–Asp-127 enclose the FAD-binding FR-type domain. 12 residues coordinate FAD: Arg-73, Ser-74, Thr-76, Asp-90, Val-92, His-96, Ala-100, Thr-101, Lys-247, Asn-249, Thr-250, and Ala-252.

This sequence belongs to the SIP oxidoreductase family. Requires FAD as cofactor.

Ferric-siderophore reductase involved in iron removal from the siderophores after their transport into the cell. Catalyzes the reduction of the ferric iron bound to the hydroxamate siderophores produced by Shewanella to ferrous iron. Can use a ferredoxin as electron donor. Despite the clear evidence for the interaction with NAD(P)H, no direct reduction of the enzyme by these compounds is observed, nor consumption of NAD(P)H, suggesting that NADH and NADPH are not the physiological electron donors. The protein is Ferric siderophore reductase of Shewanella frigidimarina (strain NCIMB 400).